The primary structure comprises 181 residues: Ribonuclease HII (181 aa).

Residues 1 to 181 (MICGIDEVGR…SLHRKNFKLI (181 aa)) enclose the RNase H type-2 domain. The a divalent metal cation site is built by aspartate 6, glutamate 7, and aspartate 98.

The protein belongs to the RNase HII family. Mn(2+) is required as a cofactor. Mg(2+) serves as cofactor.

The protein localises to the cytoplasm. The enzyme catalyses Endonucleolytic cleavage to 5'-phosphomonoester.. In terms of biological role, endonuclease that specifically degrades the RNA of RNA-DNA hybrids. This is Ribonuclease HII from Borreliella afzelii (strain PKo) (Borrelia afzelii).